Reading from the N-terminus, the 61-residue chain is Potassium channel toxin kappa-KTx 2.8 (61 aa).

A signal peptide spans 1–21 (GTVYVFLLLLAFGIFTDISNA). Residues 22 to 35 (CSEQMDDEDSYEVE) constitute a propeptide that is removed on maturation. 2 disulfide bridges follow: Cys-41/Cys-59 and Cys-45/Cys-55.

It belongs to the short scorpion toxin superfamily. Potassium channel inhibitor kappa-KTx family. Kappa-KTx 2 subfamily. In terms of tissue distribution, expressed by the venom gland.

It is found in the secreted. Functionally, voltage-gated potassium channel inhibitor (Kv) that acts on Kv1.3/KCNA3 and Kv7.1/KCNQ1. 1 uM of the toxin inhibits Kv1.3/KCNA3 currents by 35.1%, whereas 10 uM of the toxin inhibits Kv7.1/KCNQ1 currents by 44.9%. The protein is Potassium channel toxin kappa-KTx 2.8 of Heterometrus petersii (Asian forest scorpion).